Reading from the N-terminus, the 300-residue chain is 4-hydroxy-tetrahydrodipicolinate synthase (300 aa).

Thr55 contacts pyruvate. The active-site Proton donor/acceptor is Tyr143. Lys171 acts as the Schiff-base intermediate with substrate in catalysis. Residue Ile211 coordinates pyruvate.

This sequence belongs to the DapA family. Homotetramer; dimer of dimers.

Its subcellular location is the cytoplasm. The catalysed reaction is L-aspartate 4-semialdehyde + pyruvate = (2S,4S)-4-hydroxy-2,3,4,5-tetrahydrodipicolinate + H2O + H(+). Its pathway is amino-acid biosynthesis; L-lysine biosynthesis via DAP pathway; (S)-tetrahydrodipicolinate from L-aspartate: step 3/4. Its function is as follows. Catalyzes the condensation of (S)-aspartate-beta-semialdehyde [(S)-ASA] and pyruvate to 4-hydroxy-tetrahydrodipicolinate (HTPA). The protein is 4-hydroxy-tetrahydrodipicolinate synthase of Mycobacterium leprae (strain Br4923).